The primary structure comprises 2345 residues: MSDDPLLSSPTEAICLNHSVTDLRLAAALKLSWTFLLAHYSGSSEIPLDIRLEYRYIDGSETNFEPFDATFEVDKKSLIEDSIGMIQNMLTPSTRPHSLSNGINSSQSDKHVPEAQVSFTFSSGSRPVLEKGATTRYAATVLELECLQGLKKEYLCRINFNRMMWNVEEATGILRQFRHIAQQIVSADVCATLSQINLMCESDIEQLKRWNSTVPDPVLACIHELFSEQAKKNPTATAVQTSEGSFDYGRLDELSSALACHLSSNGLTRGTPVPLLFDKSMWMVVATLAVLKAGATCVSICTGLPTKAIEDILEQTAAQLVLVSESQGLRLSETRTQVVSDKTMQIWHTMSGKPELPQSDPTDLACIIFTSGSTGKPKGIMLDHIALVTSIRNHGPSLGISSSSRALQFSSYAFDMSFYETYTTLLSGGCICIPSETERLNSLPQFICDHNVNWAFLTPSVLRDFHPSEFPSLRTLATGGEPVGADIANEWAGRLQLFNLWGPAEATICATGPILPGVWIPGTFGKAVGCIAWITQAENPDELVPIGAVGEVLIEGPVLAQGYSGDVEKTKASFIPFPKWRERFELTPRGRVLFRTGDLAQYNPDGTIRYVGRMGTVVKVGGQRVDIDAVEYALRRIDRSSHIAVEAVELEKETGQGPTLIAFLSSDMNGVSGSEKKRCCSIDPGSRSWEAWANIAIRLQDTLAGVLPRYMIPHLFIPVSTIPTTPSGKANKRQLQALVLGQSKAHLLQLCRQRSPDASYPEQHLTENETLLRLLVSDVLGIDRDHVAMNSRFFHLGGDSLAAVKLVALARQQGIQLKVEAILQSCSLREAAGTMISAGEKQKLQSKTSFAINKCDDKLGLLEEATVQCGISESDIEEIYPSTPLQEGLITVTSTFSASKPYVDKILFTLSATADLDRVRDAWNHVVAANDILRSRIILSPAGKAFNVVVRSEPSWQYYKTVQQYLENDNAQDMTFGKELITFNLIASHDQSASARSIGITIHHALYDNWTVSLLHKQAEDAYRGELVEPCSFSTFSHYVLQQSPDINKEFWRKQFLDLRAGTFPELPSSDYVPRANSSSQHLYKGQHQRRDFSMATNIQLAWALLLSLYTNSPDVVYGLVVNGRMAPMPGVGGLVGPTIATVPFRTTVERSMSVQAALEAIQKRVLSIVPFEQTGLQNIARMGEGPKTACNFQNLLVIQQDLEFKGEGIFCRRQNLVGAVNNFPGYGIILLCSATEHGWAFEILYSNSLIPETRARRILLQLDHLLRQLEVDPYRQLAQLELLCPSDKSKLTSWNTQLPIRVNACIPEVFGAQCLVRSERTAVSAWDGSLSYRELDRFSSIVARHLQAVGVGKGTITPILFEKSRWVVVAMLAVLKTGAAFVMLDTNQPLQRKQGICRAVRATTIATSASCAHESKVLANSIYVLDEASITKTDTNQFLPLVEVSPNDLAYVVFTSGSTGEPKGVLIEHASSCSASRAQAAKLGISPDSRVLQLSSYTFDSFAVEILASLLAGCCICIPSESESSNDIAGAVRRFSATWLCITPSVLGLTNPDEVPSLKTVVAVGESARPSQIRLWSTRVNFICGYGPSECSTGASAQLIRSAGSDPRIIGSGMGSCLWVAHTDDHNVLVPIGAIGELLIQGPIVGRGYMNSPEKTRAAFLESTAWIPEFRQVATERFYKTGDLVRQNEDGSIVYLGRKNREVKLRGQRLDLEEVENQLSAALEMDINIVAEVVKPKGVDSQPVLIAFFQVVADVELRSDNITFLELNPDIGLRLLDAEEKLRKILPPVMIPSVYLQVQRMPLTMSGKMNRQALRNKASTRTLSQLFSSGSVRHEDDYLTLQPHESTALFVCQAICGIMRDKIDDTKTLIAGKNVNLSRTGMDSIDAMMLARTISRHFGITLSIRAFLGSSVTVRDIARLIEGVKSEDNLSQFDLYAKYESIWEELRGVVRGLTPSDKPQLCDKTPAGMSVFLTGGTGFLGTHILRQILQDPRVELVTVLTRAESPAHALSKIVESAKIAQWWQESYRNRIDAWVGDLARPRLGLSDDHWARLCGYGEHKFTSIIHNGAAVHWGYDFEKLKPVNVMSTFWLLVSLFIAGPLVNFTYVSALLPECDGLTDREIALKTSDDGYSQTKYVSELLVKNFKEQLCNNPIAIVRPGLLIGSAEHGVANVGDYLWRVVSSAFSVGAYISEKGDAWIYIAAVDWVANQVIREALYESTTDLRIINVTDGLTVKEFWRAIQIASPRQLNALQSEDWLSLIRQQLDVTGKSHPLWPVISFLESSKGCLGFSHNLPPQAHSLSSMIITALIKNVRYLASLGLVSWTTTGSNCDHSVQQRIFRRVL.

The interval 226–620 (FSEQAKKNPT…VGRMGTVVKV (395 aa)) is adenylation 1. Positions 766–839 (TENETLLRLL…EAAGTMISAG (74 aa)) constitute a Carrier 1 domain. At Ser800 the chain carries O-(pantetheine 4'-phosphoryl)serine. The tract at residues 877 to 1292 (EEIYPSTPLQ…LLCPSDKSKL (416 aa)) is condensation 1. Residues 1317–1707 (VRSERTAVSA…GRKNREVKLR (391 aa)) form an adenylation 2 region. The region spanning 1843–1926 (QPHESTALFV…DIARLIEGVK (84 aa)) is the Carrier 2 domain. Residue Ser1885 is modified to O-(pantetheine 4'-phosphoryl)serine. The tract at residues 1969–2256 (GMSVFLTGGT…PRQLNALQSE (288 aa)) is reductase (R) domain.

The protein belongs to the NRP synthetase family.

It catalyses the reaction L-proline + L-tryptophan + 2 ATP + NADPH = (S)-3-(indol-3-ylmethyl)-6,7,8,8a-tetrahydropyrrolo[1,2-a]pyrazin-1-one + 2 AMP + 2 diphosphate + NADP(+) + H2O + H(+). Nonribisomal peptide synthetase; part of the gene cluster that mediates the biosynthesis of malbrancheamide, a dichlorinated fungal indole alkaloid that belongs to a family of natural products containing a characteristic bicyclo[2.2.2]diazaoctane core. The first step of malbrancheamide biosynthesis involves coupling of L-proline and L-tryptophan by malG, a bimodular NRPS, to produce L-Pro-L-Trp aldehyde through reductive offloading. This compound undergoes spontaneous cyclization and dehydration to give a dienamine which is reverse prenylated at C-2 by malE. The other prenyltransferase present in the cluster, malB, displays modest activity, suggesting that may be a redundant gene in the pathway. Subsequently, a [4+2] Diels-Alder cyclo-addition catalyzed by the bifunctional enzyme malC forms the characteristic bicyclo[2.2.2]diazaoctane ring of premalbrancheamid. Finally, the flavin-dependent halogenase malA catalyzes the iterative dichlorination of the indole ring of premalbrancheamide to yield C-9 monochlorinated malbrancheamide B, C-8 monochlorinated isomalbrancheamide B, and dichlorinated malbrancheamide. MalA is also able to brominate premalbrancheamide at C-9 to yield malbrancheamide C, and, to a lesser extend, at C-8 to yield isomalbrancheamide C. Finally, malA can brominate C-9 monochlorinated malbrancheamide B at C-8 to yield malbrancheamide D, or C-8 monochlorinated isomalbrancheamide B at C-9 to produce isomalbrancheamide D. In Malbranchea aurantiaca, this protein is Nonribisomal peptide synthetase malG.